Reading from the N-terminus, the 144-residue chain is GGGGGPAGGAEDLAELDQLLRQRPSGAMPSEIKGLEFSEGLAQGKKQRLSKKLRRKLQMWLWSQTFCPVLYAWNDLGSRFWARYVKVGSCFSKRSCSVPEGMVCKPSKSVHLTVLRWRCQRRGGQRCGWIPIQYPIISECKCSC.

A signal peptide spans 1–4; it reads GGGG. Cystine bridges form between C67-C104, C90-C140, C96-C142, and C119-C127.

It belongs to the noggin family. In terms of assembly, homodimer. Interacts with GDF5; inhibits chondrocyte differentiation. Prominently expressed in the CNS. High levels found in mitral and tufted cells in the olfactory bulb, piriform cortex of the brain and Purkinje cells in the cerebellum. Low level expression seen in the lung, skeletal muscle and skin.

Its subcellular location is the secreted. Essential for cartilage morphogenesis and joint formation. Inhibitor of bone morphogenetic proteins (BMP) signaling which is required for growth and patterning of the neural tube and somite. Inhibits chondrocyte differentiation through its interaction with GDF5 and, probably, GDF6. In Rattus norvegicus (Rat), this protein is Noggin (Nog).